A 409-amino-acid chain; its full sequence is Thiaminase-1 (409 aa).

The N-terminal stretch at 1 to 29 (MSKVKGFIYKPLMVMLALLLVVVSPAGAG) is a signal peptide. The active-site Nucleophile is the Cys-143. The active-site Proton acceptor is the Glu-271.

As to quaternary structure, monomer.

The protein localises to the secreted. The catalysed reaction is pyridine + thiamine = heteropyrithiamine + 5-(2-hydroxyethyl)-4-methylthiazole. Its function is as follows. Degrades thiamine by replacing its thiazole moiety with a wide range of nucleophiles. This chain is Thiaminase-1, found in Paenibacillus thiaminolyticus (Bacillus thiaminolyticus).